A 210-amino-acid chain; its full sequence is Uracil phosphoribosyltransferase (210 aa).

5-phospho-alpha-D-ribose 1-diphosphate is bound by residues Arg78, Arg103, and 130-138 (DPMLATGGS). Residues Ile193 and 198 to 200 (GDA) each bind uracil. A 5-phospho-alpha-D-ribose 1-diphosphate-binding site is contributed by Asp199.

Belongs to the UPRTase family. Mg(2+) is required as a cofactor.

The catalysed reaction is UMP + diphosphate = 5-phospho-alpha-D-ribose 1-diphosphate + uracil. Its pathway is pyrimidine metabolism; UMP biosynthesis via salvage pathway; UMP from uracil: step 1/1. Its activity is regulated as follows. Allosterically activated by GTP. Catalyzes the conversion of uracil and 5-phospho-alpha-D-ribose 1-diphosphate (PRPP) to UMP and diphosphate. The sequence is that of Uracil phosphoribosyltransferase from Laribacter hongkongensis (strain HLHK9).